The primary structure comprises 83 residues: Small ribosomal subunit protein uS17c (83 aa).

It belongs to the universal ribosomal protein uS17 family. As to quaternary structure, part of the 30S ribosomal subunit.

The protein resides in the plastid. The protein localises to the chloroplast. Its function is as follows. One of the primary rRNA binding proteins, it binds specifically to the 5'-end of 16S ribosomal RNA. The polypeptide is Small ribosomal subunit protein uS17c (rps17) (Porphyra purpurea (Red seaweed)).